The chain runs to 536 residues: Ribulokinase (536 aa).

The protein belongs to the ribulokinase family.

The enzyme catalyses D-ribulose + ATP = D-ribulose 5-phosphate + ADP + H(+). It carries out the reaction L-ribulose + ATP = L-ribulose 5-phosphate + ADP + H(+). Its pathway is carbohydrate degradation; L-arabinose degradation via L-ribulose; D-xylulose 5-phosphate from L-arabinose (bacterial route): step 2/3. This is Ribulokinase from Staphylococcus epidermidis (strain ATCC 12228 / FDA PCI 1200).